We begin with the raw amino-acid sequence, 332 residues long: Phosphate acyltransferase (332 aa).

Belongs to the PlsX family. Homodimer. Probably interacts with PlsY.

The protein resides in the cytoplasm. It carries out the reaction a fatty acyl-[ACP] + phosphate = an acyl phosphate + holo-[ACP]. Its pathway is lipid metabolism; phospholipid metabolism. Catalyzes the reversible formation of acyl-phosphate (acyl-PO(4)) from acyl-[acyl-carrier-protein] (acyl-ACP). This enzyme utilizes acyl-ACP as fatty acyl donor, but not acyl-CoA. The protein is Phosphate acyltransferase of Sulfurimonas denitrificans (strain ATCC 33889 / DSM 1251) (Thiomicrospira denitrificans (strain ATCC 33889 / DSM 1251)).